The sequence spans 276 residues: Adenylate kinase (276 aa).

50–55 contacts ATP; sequence GAGKGT. Residues 70–99 are NMP; the sequence is ATGDMLRSQVAKKTPLGREAKKIMDQGGLV. Residues threonine 71, arginine 76, 97 to 99, 126 to 129, and glutamine 133 contribute to the AMP site; these read GLV and GFPR. Positions 167-204 are LID; the sequence is GRLVHPASGRSYHTTFNPPKKAMTDDVTGEPLIQRSDD. ATP-binding positions include arginine 168 and 177–178; that span reads SY. AMP-binding residues include arginine 201 and arginine 212. Residue glutamine 240 participates in ATP binding.

It belongs to the adenylate kinase family. AK2 subfamily. Monomer.

The protein localises to the cytoplasm. The protein resides in the cytosol. Its subcellular location is the mitochondrion intermembrane space. It catalyses the reaction AMP + ATP = 2 ADP. In terms of biological role, catalyzes the reversible transfer of the terminal phosphate group between ATP and AMP. Plays an important role in cellular energy homeostasis and in adenine nucleotide metabolism. Adenylate kinase activity is critical for regulation of the phosphate utilization and the AMP de novo biosynthesis pathways. In Pyricularia oryzae (strain 70-15 / ATCC MYA-4617 / FGSC 8958) (Rice blast fungus), this protein is Adenylate kinase.